Here is a 239-residue protein sequence, read N- to C-terminus: Cysteine-rich venom protein ophanin (239 aa).

A signal peptide spans 1 to 18; sequence MIAFTLLSLAAVLQQSFG. In terms of domain architecture, SCP spans 37 to 165; the sequence is VDLHNSLRRS…EYSYFYVCQY (129 aa). 8 disulfides stabilise this stretch: Cys-74–Cys-152, Cys-91–Cys-166, Cys-147–Cys-163, Cys-185–Cys-192, Cys-188–Cys-197, Cys-201–Cys-234, Cys-210–Cys-228, and Cys-219–Cys-232. One can recognise a ShKT domain in the interval 201-234; it reads CTLYNEYTNCDSLVKQSSCQDEWIKSKCPASCFC.

Expressed by the venom gland.

The protein localises to the secreted. Its function is as follows. Weakly blocks contraction of smooth muscle elicited by high potassium-induced depolarization, but does not block caffeine-stimulated contraction. May target voltage-gated calcium channels on smooth muscle. The polypeptide is Cysteine-rich venom protein ophanin (Ophiophagus hannah (King cobra)).